Here is a 411-residue protein sequence, read N- to C-terminus: Glucose-1-phosphate adenylyltransferase (411 aa).

Residues glycine 161, 176–177 (EK), and serine 195 contribute to the alpha-D-glucose 1-phosphate site.

Belongs to the bacterial/plant glucose-1-phosphate adenylyltransferase family. Homotetramer.

It carries out the reaction alpha-D-glucose 1-phosphate + ATP + H(+) = ADP-alpha-D-glucose + diphosphate. It participates in glycan biosynthesis; glycogen biosynthesis. Its function is as follows. Involved in the biosynthesis of ADP-glucose, a building block required for the elongation reactions to produce glycogen. Catalyzes the reaction between ATP and alpha-D-glucose 1-phosphate (G1P) to produce pyrophosphate and ADP-Glc. This chain is Glucose-1-phosphate adenylyltransferase, found in Anaeromyxobacter sp. (strain Fw109-5).